The following is a 230-amino-acid chain: Large ribosomal subunit protein uL1 (230 aa).

Belongs to the universal ribosomal protein uL1 family. As to quaternary structure, part of the 50S ribosomal subunit.

Its function is as follows. Binds directly to 23S rRNA. The L1 stalk is quite mobile in the ribosome, and is involved in E site tRNA release. In terms of biological role, protein L1 is also a translational repressor protein, it controls the translation of the L11 operon by binding to its mRNA. In Bifidobacterium longum (strain DJO10A), this protein is Large ribosomal subunit protein uL1.